A 454-amino-acid polypeptide reads, in one-letter code: Tumor necrosis factor receptor superfamily member 1A (454 aa).

A signal peptide spans 1–29; it reads MGLPTVPGLLLSLVLLALLMGIHPSGVTG. Residues 30–212 are Extracellular-facing; sequence LVPSLGDREK…VTNPQDSGTA (183 aa). TNFR-Cys repeat units lie at residues 43 to 82, 83 to 125, 126 to 166, and 167 to 196; these read LCPQ…TVCR, ECEK…DTVC, GCKE…NTVC, and NCHA…KLCL. Intrachain disulfides connect Cys44/Cys58, Cys59/Cys72, Cys62/Cys81, Cys84/Cys99, Cys102/Cys117, Cys105/Cys125, Cys127/Cys143, Cys146/Cys158, Cys149/Cys166, Cys168/Cys179, Cys182/Cys195, and Cys185/Cys191. Residue Asn54 is glycosylated (N-linked (GlcNAc...) asparagine). N-linked (GlcNAc...) asparagine glycosylation occurs at Asn151. Asn202 carries an N-linked (GlcNAc...) asparagine glycan. Residues 213–235 form a helical membrane-spanning segment; it reads VLLPLVILLGLCLLSFIFISLMC. Residues 236–454 lie on the Cytoplasmic side of the membrane; it reads RYPRWRPEVY…APSSTTRLPR (219 aa). The interval 339-349 is N-SMase activation domain (NSD); sequence VQKWEDSAHPQ. Residues 356–441 form the Death domain; the sequence is LAILYAVVDG…GCLENILEAL (86 aa). (Microbial infection) N-beta-linked (GlcNAc) arginine glycosylation is present at Arg376.

Binding of TNF to the extracellular domain leads to homotrimerization. The aggregated death domains provide a novel molecular interface that interacts specifically with the death domain of TRADD. Various TRADD-interacting proteins such as TRAFS, RIPK1 and possibly FADD, are recruited to the complex by their association with TRADD. This complex activates at least two distinct signaling cascades, apoptosis and NF-kappa-B signaling. Interacts with BAG4, BABAM2, FEM1B, GRB2, SQSTM1 and TRPC4AP. Interacts with DAB2IP. Interacts directly with NOL3 (via CARD domain); inhibits TNF-signaling pathway. Interacts with SH3RF2, TRADD and RIPK1. SH3RF2 facilitates the recruitment of RIPK1 and TRADD to TNFRSF1A in a TNF-alpha-dependent process. Interacts with PGLYRP1; this interaction is important for cell death induction. Interacts (via death domain) with MADD (via death domain). (Microbial infection) Glycosylated at Arg-376 by S.typhimurium protein Ssek3: arginine GlcNAcylation prevents homotypic/heterotypic death domain interactions.

It localises to the cell membrane. It is found in the golgi apparatus membrane. Receptor for TNFSF2/TNF-alpha and homotrimeric TNFSF1/lymphotoxin-alpha. The adapter molecule FADD recruits caspase-8 to the activated receptor. The resulting death-inducing signaling complex (DISC) performs caspase-8 proteolytic activation which initiates the subsequent cascade of caspases (aspartate-specific cysteine proteases) mediating apoptosis. The protein is Tumor necrosis factor receptor superfamily member 1A (Tnfrsf1a) of Mus musculus (Mouse).